The primary structure comprises 407 residues: Probable tRNA sulfurtransferase (407 aa).

In terms of domain architecture, THUMP spans 61 to 165 (NEITYRLSKI…LDAIYMYEEV (105 aa)). Residues 183–184 (ML), 208–209 (HF), Arg265, Gly287, and Gln296 contribute to the ATP site.

This sequence belongs to the ThiI family.

The protein resides in the cytoplasm. It carries out the reaction [ThiI sulfur-carrier protein]-S-sulfanyl-L-cysteine + a uridine in tRNA + 2 reduced [2Fe-2S]-[ferredoxin] + ATP + H(+) = [ThiI sulfur-carrier protein]-L-cysteine + a 4-thiouridine in tRNA + 2 oxidized [2Fe-2S]-[ferredoxin] + AMP + diphosphate. The enzyme catalyses [ThiS sulfur-carrier protein]-C-terminal Gly-Gly-AMP + S-sulfanyl-L-cysteinyl-[cysteine desulfurase] + AH2 = [ThiS sulfur-carrier protein]-C-terminal-Gly-aminoethanethioate + L-cysteinyl-[cysteine desulfurase] + A + AMP + 2 H(+). It functions in the pathway cofactor biosynthesis; thiamine diphosphate biosynthesis. Its function is as follows. Catalyzes the ATP-dependent transfer of a sulfur to tRNA to produce 4-thiouridine in position 8 of tRNAs, which functions as a near-UV photosensor. Also catalyzes the transfer of sulfur to the sulfur carrier protein ThiS, forming ThiS-thiocarboxylate. This is a step in the synthesis of thiazole, in the thiamine biosynthesis pathway. The sulfur is donated as persulfide by IscS. The protein is Probable tRNA sulfurtransferase of Staphylococcus aureus (strain Mu3 / ATCC 700698).